A 393-amino-acid chain; its full sequence is Cysteine protease ATG4B (393 aa).

Met-1 carries the N-acetylmethionine modification. The residue at position 34 (Ser-34) is a Phosphoserine. Catalysis depends on Cys-74, which acts as the Nucleophile. Cys-189 is subject to S-nitrosocysteine. Residues Asp-278 and His-280 contribute to the active site. S-nitrosocysteine is present on residues Cys-292 and Cys-301. Cysteines 292 and 361 form a disulfide. Phosphoserine is present on residues Ser-316 and Ser-383. Positions 388–391 (FEIL) match the LIR motif. Ser-392 is subject to Phosphoserine.

This sequence belongs to the peptidase C54 family. Interacts with PFKP; promoting phosphorylation of ATG4B at Ser-34. Interacts with GBP7. Phosphorylation at Ser-383 and Ser-392 promotes autophagy by increasing protein delipidation activity without affecting proteolytic activation of ATG8 proteins. Phosphorylation at Ser-316 by ULK1 inhibits autophagy by decreasing both proteolytic activation and delipidation activities. Phosphorylation at Ser-316 is dephosphorylated by protein phosphatase 2A (PP2A). Phosphorylation at Ser-34 by AKT2 promotes its hydrolase activity, leading to increased proteolytic activation and delipidation of ATG8 family proteins. Phosphorylation at Ser-34 by AKT1 promotes mitochondrial localization and inhibition of the F1F0-ATP synthase activity, leading to elevation of mitochondrial reactive oxygen species (ROS). In terms of processing, ubiquitinated by RNF5, leading to its degradation by the proteasome. Post-translationally, S-nitrosylation at Cys-189 and Cys-292 in response to high glucose decreases both proteolytic activation and delipidation activities. O-glycosylated by OGT, leading to increase protease activity, thereby promoting the proteolytic activation of ATG8 family proteins. In terms of processing, forms reversible intrachain disulfide bonds in response to oxidative stress. Forms interchain disulfide bonds, leading to formation of homooligomers in response to oxidation.

Its subcellular location is the cytoplasm. It localises to the cytosol. The protein resides in the cytoplasmic vesicle. The protein localises to the autophagosome. It is found in the endoplasmic reticulum. Its subcellular location is the mitochondrion. The enzyme catalyses [protein]-C-terminal L-amino acid-glycyl-phosphatidylethanolamide + H2O = [protein]-C-terminal L-amino acid-glycine + a 1,2-diacyl-sn-glycero-3-phosphoethanolamine. It catalyses the reaction [protein]-C-terminal L-amino acid-glycyl-phosphatidylserine + H2O = [protein]-C-terminal L-amino acid-glycine + a 1,2-diacyl-sn-glycero-3-phospho-L-serine. With respect to regulation, inhibited by N-ethylmaleimide. Redox-regulated during autophagy since reducing conditions activate ATG4A whereas an oxidizing environment such as the presence of H(2)O(2) inhibits its activity. The cysteine protease activity compounds is inhibited by styrylquinoline compounds 4-28 and LV-320. Its function is as follows. Cysteine protease that plays a key role in autophagy by mediating both proteolytic activation and delipidation of ATG8 family proteins. Required for canonical autophagy (macroautophagy), non-canonical autophagy as well as for mitophagy. The protease activity is required for proteolytic activation of ATG8 family proteins: cleaves the C-terminal amino acid of ATG8 proteins MAP1LC3A, MAP1LC3B, MAP1LC3C, GABARAPL1, GABARAPL2 and GABARAP, to reveal a C-terminal glycine. Exposure of the glycine at the C-terminus is essential for ATG8 proteins conjugation to phosphatidylethanolamine (PE) and insertion to membranes, which is necessary for autophagy. Protease activity is also required to counteract formation of high-molecular weight conjugates of ATG8 proteins (ATG8ylation): acts as a deubiquitinating-like enzyme that removes ATG8 conjugated to other proteins, such as ATG3. In addition to the protease activity, also mediates delipidation of ATG8 family proteins. Catalyzes delipidation of PE-conjugated forms of ATG8 proteins during macroautophagy. Also involved in non-canonical autophagy, a parallel pathway involving conjugation of ATG8 proteins to single membranes at endolysosomal compartments, by catalyzing delipidation of ATG8 proteins conjugated to phosphatidylserine (PS). Compared to other members of the family (ATG4A, ATG4C or ATG4C), constitutes the major protein for proteolytic activation of ATG8 proteins, while it displays weaker delipidation activity than other ATG4 paralogs. Involved in phagophore growth during mitophagy independently of its protease activity and of ATG8 proteins: acts by regulating ATG9A trafficking to mitochondria and promoting phagophore-endoplasmic reticulum contacts during the lipid transfer phase of mitophagy. (Microbial infection) Mediates cleavage of an ATG8 protein homolog coded in the genome of cytopathogenic bovine viral diarrhea virus (BVDV). The polypeptide is Cysteine protease ATG4B (ATG4B) (Bos taurus (Bovine)).